An 89-amino-acid chain; its full sequence is Small ribosomal subunit protein uS15 (89 aa).

This sequence belongs to the universal ribosomal protein uS15 family. As to quaternary structure, part of the 30S ribosomal subunit. Forms a bridge to the 50S subunit in the 70S ribosome, contacting the 23S rRNA.

One of the primary rRNA binding proteins, it binds directly to 16S rRNA where it helps nucleate assembly of the platform of the 30S subunit by binding and bridging several RNA helices of the 16S rRNA. In terms of biological role, forms an intersubunit bridge (bridge B4) with the 23S rRNA of the 50S subunit in the ribosome. The polypeptide is Small ribosomal subunit protein uS15 (Shouchella clausii (strain KSM-K16) (Alkalihalobacillus clausii)).